Here is a 913-residue protein sequence, read N- to C-terminus: Proline and serine-rich protein 1 (913 aa).

M1 is subject to N-acetylmethionine. Disordered stretches follow at residues 233–291 (VPPP…PAVS), 488–507 (ASLS…ATNK), 592–618 (SEPT…TLGL), and 888–913 (DGFP…SGWQ). Over residues 251-275 (LSSQSKPTQSQTFSTPASQLFSPHG) the composition is skewed to polar residues. Positions 276 to 291 (SSNPSTPAATPVPAVS) are enriched in low complexity. The span at 488 to 506 (ASLSSLPNRNSDSPASATN) shows a compositional bias: polar residues. Over residues 893 to 913 (YPSTPGTPFSLQTGLSQSGWQ) the composition is skewed to polar residues.

Interacts with TET2 and OGT; this interaction mediates TET2 O-GlcNAcylation and stability by promoting the interaction between OGT and TET2. Interacts with KDM6A. Interacts with TET1. Post-translationally, glycosylated. Interaction with OGT leads to GlcNAcylation.

Mediates OGT interaction with and O-GlcNAcylation of TET2 to control TET2 stabilization at enhancers and CpG islands (CGIs). The polypeptide is Proline and serine-rich protein 1 (Mus musculus (Mouse)).